Consider the following 276-residue polypeptide: Diaminopimelate epimerase (276 aa).

Asn13, Gln46, and Asn66 together coordinate substrate. Cys75 functions as the Proton donor in the catalytic mechanism. Substrate-binding positions include 76–77 (GN), Asn159, Asn192, and 210–211 (ER). The Proton acceptor role is filled by Cys219. 220 to 221 (GT) is a substrate binding site.

Belongs to the diaminopimelate epimerase family. As to quaternary structure, homodimer.

The protein localises to the cytoplasm. The enzyme catalyses (2S,6S)-2,6-diaminopimelate = meso-2,6-diaminopimelate. Its pathway is amino-acid biosynthesis; L-lysine biosynthesis via DAP pathway; DL-2,6-diaminopimelate from LL-2,6-diaminopimelate: step 1/1. Its function is as follows. Catalyzes the stereoinversion of LL-2,6-diaminopimelate (L,L-DAP) to meso-diaminopimelate (meso-DAP), a precursor of L-lysine and an essential component of the bacterial peptidoglycan. This is Diaminopimelate epimerase from Hahella chejuensis (strain KCTC 2396).